The following is a 502-amino-acid chain: Xylan O-acetyltransferase 13 (502 aa).

The Cytoplasmic segment spans residues 1 to 53 (MWSALFSHLREVHKRSGVKEEKLIMKSPPAAGEAGCHKPQATATNKMTVLQSP). The helical; Signal-anchor for type II membrane protein transmembrane segment at 54-76 (LGLRTILTSLVAFFIVVSSVSLL) threads the bilayer. The Lumenal segment spans residues 77 to 502 (FDRGQDAQAQ…EFLYAYIMHK (426 aa)). Cystine bridges form between Cys152/Cys203, Cys174/Cys239, Cys183/Cys483, and Cys399/Cys479. N-linked (GlcNAc...) asparagine glycans are attached at residues Asn153, Asn163, Asn189, and Asn209. The short motif at 226–228 (GDS) is the GDS motif element. Ser228 functions as the Nucleophile in the catalytic mechanism. N-linked (GlcNAc...) asparagine glycans are attached at residues Asn255, Asn267, Asn372, Asn401, and Asn442. The active-site Proton donor is the Asp478. The DXXH motif signature appears at 478-481 (DCTH). His481 (proton acceptor) is an active-site residue.

Belongs to the PC-esterase family. TBL subfamily.

The protein localises to the golgi apparatus membrane. Its function is as follows. Xylan acetyltransferase required for 2-O- and 3-O-monoacetylation of xylosyl residues in xylan. Catalyzes the 2-O-acetylation of xylan, followed by nonenzymatic acetyl migration to the O-3 position, resulting in products that are monoacetylated at both O-2 and O-3 positions. The protein is Xylan O-acetyltransferase 13 of Oryza sativa subsp. japonica (Rice).